We begin with the raw amino-acid sequence, 596 residues long: Probable translation initiation factor IF-2 (596 aa).

The tr-type G domain occupies 3–220 (IRSPIVSVLG…MLLGLAQEYL (218 aa)). The tract at residues 12–19 (GHVDHGKT) is G1. Residue 12–19 (GHVDHGKT) participates in GTP binding. Residues 37 to 41 (GITQH) form a G2 region. The interval 76 to 79 (DTPG) is G3. Residues 76-80 (DTPGH) and 130-133 (NKID) contribute to the GTP site. The segment at 130 to 133 (NKID) is G4. The G5 stretch occupies residues 198–200 (SAK).

This sequence belongs to the TRAFAC class translation factor GTPase superfamily. Classic translation factor GTPase family. IF-2 subfamily.

Functionally, function in general translation initiation by promoting the binding of the formylmethionine-tRNA to ribosomes. Seems to function along with eIF-2. The chain is Probable translation initiation factor IF-2 from Methanobrevibacter smithii (strain ATCC 35061 / DSM 861 / OCM 144 / PS).